The following is an 840-amino-acid chain: Protein translocase subunit SecA (840 aa).

ATP contacts are provided by residues Gln-87, 105-109 (GEGKT), and Asp-494. A disordered region spans residues 518 to 537 (RRIDNQLRGRSGRQGDPGSS). Positions 826, 828, 837, and 838 each coordinate Zn(2+).

Belongs to the SecA family. In terms of assembly, monomer and homodimer. Part of the essential Sec protein translocation apparatus which comprises SecA, SecYEG and auxiliary proteins SecDF-YajC and YidC. The cofactor is Zn(2+).

It localises to the cell inner membrane. It is found in the cytoplasm. The enzyme catalyses ATP + H2O + cellular proteinSide 1 = ADP + phosphate + cellular proteinSide 2.. Functionally, part of the Sec protein translocase complex. Interacts with the SecYEG preprotein conducting channel. Has a central role in coupling the hydrolysis of ATP to the transfer of proteins into and across the cell membrane, serving as an ATP-driven molecular motor driving the stepwise translocation of polypeptide chains across the membrane. This Desulforapulum autotrophicum (strain ATCC 43914 / DSM 3382 / VKM B-1955 / HRM2) (Desulfobacterium autotrophicum) protein is Protein translocase subunit SecA.